Here is a 323-residue protein sequence, read N- to C-terminus: D-specific alpha-keto acid dehydrogenase (323 aa).

NAD(+) contacts are provided by residues 157-158 (HI), 230-232 (TGR), and Asp-256. Arg-232 is an active-site residue. Residue Glu-261 is part of the active site. Residue His-293 is the Proton donor of the active site. 293-296 (HTAY) serves as a coordination point for NAD(+).

It belongs to the D-isomer specific 2-hydroxyacid dehydrogenase family.

In terms of biological role, required for high-level resistance to glycopeptides antibiotics. Catalyzes the reduction of 2-keto acids to 2-D-hydroxy acids that give rise to peptidoglycan precursors that terminate in the depsipeptide D-alanine-2-lactate rather than the dipeptide D-alanine-D-alanine thus preventing vancomycin binding. This chain is D-specific alpha-keto acid dehydrogenase (vanHB), found in Enterococcus faecalis (strain ATCC 700802 / V583).